Reading from the N-terminus, the 372-residue chain is Alanine racemase (372 aa).

The Proton acceptor; specific for D-alanine role is filled by lysine 37. The residue at position 37 (lysine 37) is an N6-(pyridoxal phosphate)lysine. Arginine 136 provides a ligand contact to substrate. The Proton acceptor; specific for L-alanine role is filled by tyrosine 265. Methionine 313 serves as a coordination point for substrate.

Belongs to the alanine racemase family. It depends on pyridoxal 5'-phosphate as a cofactor.

It carries out the reaction L-alanine = D-alanine. The protein operates within amino-acid biosynthesis; D-alanine biosynthesis; D-alanine from L-alanine: step 1/1. Its function is as follows. Catalyzes the interconversion of L-alanine and D-alanine. May also act on other amino acids. The polypeptide is Alanine racemase (alr) (Synechocystis sp. (strain ATCC 27184 / PCC 6803 / Kazusa)).